The following is a 283-amino-acid chain: Pantothenate synthetase (283 aa).

34-41 (MGALHDGH) serves as a coordination point for ATP. The Proton donor role is filled by His-41. Position 65 (Gln-65) interacts with (R)-pantoate. Residue Gln-65 participates in beta-alanine binding. ATP is bound at residue 152 to 155 (GEKD). Gln-158 is a (R)-pantoate binding site. Residues Val-181 and 189 to 192 (MSSR) contribute to the ATP site.

The protein belongs to the pantothenate synthetase family. As to quaternary structure, homodimer.

Its subcellular location is the cytoplasm. It catalyses the reaction (R)-pantoate + beta-alanine + ATP = (R)-pantothenate + AMP + diphosphate + H(+). It functions in the pathway cofactor biosynthesis; (R)-pantothenate biosynthesis; (R)-pantothenate from (R)-pantoate and beta-alanine: step 1/1. Its function is as follows. Catalyzes the condensation of pantoate with beta-alanine in an ATP-dependent reaction via a pantoyl-adenylate intermediate. This chain is Pantothenate synthetase, found in Rhodopseudomonas palustris (strain BisB18).